Consider the following 69-residue polypeptide: Sec-independent protein translocase protein TatA (69 aa).

The chain crosses the membrane as a helical span at residues Met-1–Gly-21. The segment covering Glu-47–Ala-63 has biased composition (basic and acidic residues). The disordered stretch occupies residues Glu-47–Ser-69.

Belongs to the TatA/E family. In terms of assembly, forms a complex with TatC.

It is found in the cell inner membrane. Functionally, part of the twin-arginine translocation (Tat) system that transports large folded proteins containing a characteristic twin-arginine motif in their signal peptide across membranes. TatA could form the protein-conducting channel of the Tat system. The polypeptide is Sec-independent protein translocase protein TatA (Chlorobium chlorochromatii (strain CaD3)).